An 863-amino-acid polypeptide reads, in one-letter code: Valine--tRNA ligase (863 aa).

The 'HIGH' region signature appears at P43–H53. Positions K517–S521 match the 'KMSKS' region motif. K520 serves as a coordination point for ATP.

Belongs to the class-I aminoacyl-tRNA synthetase family. ValS type 2 subfamily.

It localises to the cytoplasm. The catalysed reaction is tRNA(Val) + L-valine + ATP = L-valyl-tRNA(Val) + AMP + diphosphate. Functionally, catalyzes the attachment of valine to tRNA(Val). As ValRS can inadvertently accommodate and process structurally similar amino acids such as threonine, to avoid such errors, it has a 'posttransfer' editing activity that hydrolyzes mischarged Thr-tRNA(Val) in a tRNA-dependent manner. The chain is Valine--tRNA ligase from Archaeoglobus fulgidus (strain ATCC 49558 / DSM 4304 / JCM 9628 / NBRC 100126 / VC-16).